We begin with the raw amino-acid sequence, 163 residues long: Photosystem II extrinsic protein V (163 aa).

Positions Met-1–Ala-26 are cleaved as a signal peptide. Heme c contacts are provided by Cys-63, Cys-66, His-67, and His-118.

It belongs to the cytochrome c family. PsbV subfamily. PSII is composed of 1 copy each of membrane proteins PsbA, PsbB, PsbC, PsbD, PsbE, PsbF, PsbH, PsbI, PsbJ, PsbK, PsbL, PsbM, PsbT, PsbY, PsbZ, Psb30/Ycf12, at least 3 peripheral proteins of the oxygen-evolving complex and a large number of cofactors. It forms dimeric complexes. The extrinsic subunits in red algae are PsbO (OEC33), PsbQ', cytochrome c-550 and PsbU. Requires heme c as cofactor.

It localises to the plastid. The protein localises to the chloroplast thylakoid membrane. Functionally, one of the extrinsic, lumenal subunits of photosystem II (PSII). PSII is a light-driven water plastoquinone oxidoreductase, using light energy to abstract electrons from H(2)O, generating a proton gradient subsequently used for ATP formation. The extrinsic proteins stabilize the structure of photosystem II oxygen-evolving complex (OEC), the ion environment of oxygen evolution and protect the OEC against heat-induced inactivation. This Porphyra purpurea (Red seaweed) protein is Photosystem II extrinsic protein V.